Consider the following 69-residue polypeptide: uncharacterized protein (69 aa).

An HTH cro/C1-type domain is found at 10 to 64 (IRAFRKLKGYTQEGFAKALGISVSILGEIERGNRLPSAAIIQDAADVLNISADEL). The segment at residues 21-40 (QEGFAKALGISVSILGEIER) is a DNA-binding region (H-T-H motif).

This is an uncharacterized protein from Bacillus subtilis (strain 168).